The primary structure comprises 449 residues: Glucose-6-phosphate isomerase (449 aa).

The active-site Proton donor is Glu-291. Active-site residues include His-312 and Lys-426.

It belongs to the GPI family.

The protein resides in the cytoplasm. The enzyme catalyses alpha-D-glucose 6-phosphate = beta-D-fructose 6-phosphate. The protein operates within carbohydrate biosynthesis; gluconeogenesis. It participates in carbohydrate degradation; glycolysis; D-glyceraldehyde 3-phosphate and glycerone phosphate from D-glucose: step 2/4. Its function is as follows. Catalyzes the reversible isomerization of glucose-6-phosphate to fructose-6-phosphate. This is Glucose-6-phosphate isomerase from Streptococcus agalactiae serotype Ia (strain ATCC 27591 / A909 / CDC SS700).